Consider the following 211-residue polypeptide: Glycerol-3-phosphate acyltransferase 2 (211 aa).

A run of 5 helical transmembrane segments spans residues 6–26 (FASLFILAYLLGSFPAGVVVG), 57–77 (IIVFLIDFFKGTLATLIPVIF), 82–102 (HYLCLIFGLVAILGHAFPIFL), 124–144 (FFLICAVIFIPILFITSMVSL), and 148–168 (ISVVLIFIASFFFHDIALSII).

The protein belongs to the PlsY family. As to quaternary structure, probably interacts with PlsX.

It localises to the cell membrane. The catalysed reaction is an acyl phosphate + sn-glycerol 3-phosphate = a 1-acyl-sn-glycero-3-phosphate + phosphate. Its pathway is lipid metabolism; phospholipid metabolism. Functionally, catalyzes the transfer of an acyl group from acyl-phosphate (acyl-PO(4)) to glycerol-3-phosphate (G3P) to form lysophosphatidic acid (LPA). This enzyme utilizes acyl-phosphate as fatty acyl donor, but not acyl-CoA or acyl-ACP. The sequence is that of Glycerol-3-phosphate acyltransferase 2 from Lactobacillus acidophilus (strain ATCC 700396 / NCK56 / N2 / NCFM).